Reading from the N-terminus, the 304-residue chain is Release factor glutamine methyltransferase (304 aa).

Positions 144 and 188 each coordinate S-adenosyl-L-methionine. 188 to 191 (NPPY) serves as a coordination point for substrate.

Belongs to the protein N5-glutamine methyltransferase family. PrmC subfamily.

The catalysed reaction is L-glutaminyl-[peptide chain release factor] + S-adenosyl-L-methionine = N(5)-methyl-L-glutaminyl-[peptide chain release factor] + S-adenosyl-L-homocysteine + H(+). Methylates the class 1 translation termination release factors RF1/PrfA and RF2/PrfB on the glutamine residue of the universally conserved GGQ motif. The chain is Release factor glutamine methyltransferase from Mycobacterium tuberculosis (strain ATCC 25618 / H37Rv).